A 241-amino-acid chain; its full sequence is Purine nucleoside phosphorylase DeoD-type (241 aa).

Residue His-5 participates in a purine D-ribonucleoside binding. Phosphate contacts are provided by residues Gly-21, Arg-25, Arg-44, and 88–91; that span reads RVGS. A purine D-ribonucleoside contacts are provided by residues 180–182 and 204–205; these read EME and SD. The Proton donor role is filled by Asp-205.

This sequence belongs to the PNP/UDP phosphorylase family. As to quaternary structure, homohexamer; trimer of homodimers.

It catalyses the reaction a purine D-ribonucleoside + phosphate = a purine nucleobase + alpha-D-ribose 1-phosphate. The enzyme catalyses a purine 2'-deoxy-D-ribonucleoside + phosphate = a purine nucleobase + 2-deoxy-alpha-D-ribose 1-phosphate. In terms of biological role, catalyzes the reversible phosphorolytic breakdown of the N-glycosidic bond in the beta-(deoxy)ribonucleoside molecules, with the formation of the corresponding free purine bases and pentose-1-phosphate. The chain is Purine nucleoside phosphorylase DeoD-type from Yersinia enterocolitica serotype O:8 / biotype 1B (strain NCTC 13174 / 8081).